The primary structure comprises 81 residues: Sulfur carrier protein TusA (81 aa).

Cysteine 19 serves as the catalytic Cysteine persulfide intermediate.

Belongs to the sulfur carrier protein TusA family.

It is found in the cytoplasm. In terms of biological role, sulfur carrier protein which probably makes part of a sulfur-relay system. The sequence is that of Sulfur carrier protein TusA from Shewanella woodyi (strain ATCC 51908 / MS32).